Consider the following 107-residue polypeptide: Integration host factor subunit beta (107 aa).

Positions 54 to 107 are disordered; sequence NRRPARVGRNPKSGEKVQVPEKHVPHFKPGKELRERVDGRAGEPLKNDEPEDGQ. The segment covering 65–101 has biased composition (basic and acidic residues); the sequence is KSGEKVQVPEKHVPHFKPGKELRERVDGRAGEPLKND.

This sequence belongs to the bacterial histone-like protein family. As to quaternary structure, heterodimer of an alpha and a beta chain.

Its function is as follows. This protein is one of the two subunits of integration host factor, a specific DNA-binding protein that functions in genetic recombination as well as in transcriptional and translational control. The chain is Integration host factor subunit beta from Burkholderia thailandensis (strain ATCC 700388 / DSM 13276 / CCUG 48851 / CIP 106301 / E264).